The chain runs to 95 residues: Co-chaperonin GroES (95 aa).

This sequence belongs to the GroES chaperonin family. As to quaternary structure, heptamer of 7 subunits arranged in a ring. Interacts with the chaperonin GroEL.

The protein localises to the cytoplasm. In terms of biological role, together with the chaperonin GroEL, plays an essential role in assisting protein folding. The GroEL-GroES system forms a nano-cage that allows encapsulation of the non-native substrate proteins and provides a physical environment optimized to promote and accelerate protein folding. GroES binds to the apical surface of the GroEL ring, thereby capping the opening of the GroEL channel. This chain is Co-chaperonin GroES, found in Chlorobium luteolum (strain DSM 273 / BCRC 81028 / 2530) (Pelodictyon luteolum).